We begin with the raw amino-acid sequence, 452 residues long: Ribosomal protein uS12 methylthiotransferase RimO (452 aa).

The MTTase N-terminal domain occupies P5 to S116. Positions 14, 50, 79, 154, 158, and 161 each coordinate [4Fe-4S] cluster. The Radical SAM core domain maps to T140–R369. Residues R372–S438 form the TRAM domain.

It belongs to the methylthiotransferase family. RimO subfamily. [4Fe-4S] cluster is required as a cofactor.

It is found in the cytoplasm. The catalysed reaction is L-aspartate(89)-[ribosomal protein uS12]-hydrogen + (sulfur carrier)-SH + AH2 + 2 S-adenosyl-L-methionine = 3-methylsulfanyl-L-aspartate(89)-[ribosomal protein uS12]-hydrogen + (sulfur carrier)-H + 5'-deoxyadenosine + L-methionine + A + S-adenosyl-L-homocysteine + 2 H(+). Catalyzes the methylthiolation of an aspartic acid residue of ribosomal protein uS12. This is Ribosomal protein uS12 methylthiotransferase RimO from Synechococcus sp. (strain ATCC 27144 / PCC 6301 / SAUG 1402/1) (Anacystis nidulans).